We begin with the raw amino-acid sequence, 559 residues long: Cellulose biosynthesis protein BcsG (559 aa).

4 consecutive transmembrane segments (helical) span residues 34-54, 68-88, 113-133, and 139-159; these read LLWA…MAFL, HWIA…LPGP, FINW…LFLS, and TVFV…GPVF.

It localises to the cell membrane. Its function is as follows. Required for cellulose biosynthesis. The protein is Cellulose biosynthesis protein BcsG (bcsG) of Salmonella typhimurium (strain LT2 / SGSC1412 / ATCC 700720).